Reading from the N-terminus, the 92-residue chain is Probable Fe(2+)-trafficking protein (92 aa).

This sequence belongs to the Fe(2+)-trafficking protein family.

Could be a mediator in iron transactions between iron acquisition and iron-requiring processes, such as synthesis and/or repair of Fe-S clusters in biosynthetic enzymes. This chain is Probable Fe(2+)-trafficking protein, found in Shewanella piezotolerans (strain WP3 / JCM 13877).